Here is a 1124-residue protein sequence, read N- to C-terminus: DNA-directed RNA polymerase subunit Rpo2 (1124 aa).

Residues C1061, C1064, C1079, and H1082 each coordinate Zn(2+).

Belongs to the RNA polymerase beta chain family. As to quaternary structure, part of the 13-subunit RNA polymerase complex. Zn(2+) is required as a cofactor.

It is found in the cytoplasm. It catalyses the reaction RNA(n) + a ribonucleoside 5'-triphosphate = RNA(n+1) + diphosphate. DNA-dependent RNA polymerase (RNAP) catalyzes the transcription of DNA into RNA using the four ribonucleoside triphosphates as substrates. This subunit is involved in DNA promoter recognition. This is DNA-directed RNA polymerase subunit Rpo2 from Saccharolobus solfataricus (strain ATCC 35092 / DSM 1617 / JCM 11322 / P2) (Sulfolobus solfataricus).